We begin with the raw amino-acid sequence, 308 residues long: MSEPVLAVSGVNKSFPIYRSPWQALWHALNPKADVKVFQALRDIELTVYRGETIGIVGHNGAGKSTLLQLITGVMQPDCGQITRTGRVVGLLELGSGFNPEFTGRENIFFNGAILGMSQREMDDRLERILSFAAIGDFIDQPVKNYSSGMMVRLAFSVIINTDPDVLIIDEALAVGDDAFQRKCYARLKQLQSQGVTILLVSHAAGSVIELCDRAVLLDRGEVLLQGEPKAVVHNYHKLLHMEGDERARFRYHLRQTGRGDSYISDESTSEPKIKSAPGILSVDLQPQSTVWYESKGAVLSDVHIESF.

Positions 6-245 (LAVSGVNKSF…YHKLLHMEGD (240 aa)) constitute an ABC transporter domain. 58–65 (GHNGAGKS) serves as a coordination point for ATP.

This sequence belongs to the ABC transporter superfamily.

In terms of biological role, influences the expression of the surface array protein gene (vapA). May have both regulatory and transport activities. This chain is ABC transporter protein AbcA (abcA), found in Aeromonas salmonicida.